The primary structure comprises 309 residues: uncharacterized protein (309 aa).

To S.pombe SpAC14C4.04.

This is an uncharacterized protein from Schizosaccharomyces pombe (strain 972 / ATCC 24843) (Fission yeast).